The primary structure comprises 392 residues: L-rhamnonate dehydratase (392 aa).

2 residues coordinate substrate: His-22 and Arg-48. The Mg(2+) site is built by Asp-214, Glu-240, and Glu-268. His-318 serves as the catalytic Proton acceptor. Glu-338 serves as a coordination point for substrate.

Belongs to the mandelate racemase/muconate lactonizing enzyme family. RhamD subfamily. As to quaternary structure, homooctamer; tetramer of dimers. Requires Mg(2+) as cofactor.

It catalyses the reaction L-rhamnonate = 2-dehydro-3-deoxy-L-rhamnonate + H2O. Catalyzes the dehydration of L-rhamnonate to 2-keto-3-deoxy-L-rhamnonate (KDR). The sequence is that of L-rhamnonate dehydratase from Paraburkholderia phytofirmans (strain DSM 17436 / LMG 22146 / PsJN) (Burkholderia phytofirmans).